The following is a 335-amino-acid chain: Acetyl-coenzyme A carboxylase carboxyl transferase subunit alpha (335 aa).

In terms of domain architecture, CoA carboxyltransferase C-terminal spans 40–294; sequence QLETLATRRR…KEAIEKHLDT (255 aa).

Belongs to the AccA family. In terms of assembly, acetyl-CoA carboxylase is a heterohexamer composed of biotin carboxyl carrier protein (AccB), biotin carboxylase (AccC) and two subunits each of ACCase subunit alpha (AccA) and ACCase subunit beta (AccD).

The protein localises to the cytoplasm. The enzyme catalyses N(6)-carboxybiotinyl-L-lysyl-[protein] + acetyl-CoA = N(6)-biotinyl-L-lysyl-[protein] + malonyl-CoA. It functions in the pathway lipid metabolism; malonyl-CoA biosynthesis; malonyl-CoA from acetyl-CoA: step 1/1. Its function is as follows. Component of the acetyl coenzyme A carboxylase (ACC) complex. First, biotin carboxylase catalyzes the carboxylation of biotin on its carrier protein (BCCP) and then the CO(2) group is transferred by the carboxyltransferase to acetyl-CoA to form malonyl-CoA. The sequence is that of Acetyl-coenzyme A carboxylase carboxyl transferase subunit alpha from Prochlorococcus marinus (strain MIT 9312).